The sequence spans 1087 residues: DNA polymerase II large subunit (1087 aa).

This sequence belongs to the archaeal DNA polymerase II family. As to quaternary structure, heterodimer of a large subunit and a small subunit.

The catalysed reaction is DNA(n) + a 2'-deoxyribonucleoside 5'-triphosphate = DNA(n+1) + diphosphate. The enzyme catalyses Exonucleolytic cleavage in the 3'- to 5'-direction to yield nucleoside 5'-phosphates.. In terms of biological role, possesses two activities: a DNA synthesis (polymerase) and an exonucleolytic activity that degrades single-stranded DNA in the 3'- to 5'-direction. Has a template-primer preference which is characteristic of a replicative DNA polymerase. The protein is DNA polymerase II large subunit (polC) of Thermoplasma acidophilum (strain ATCC 25905 / DSM 1728 / JCM 9062 / NBRC 15155 / AMRC-C165).